The chain runs to 312 residues: Malate dehydrogenase (312 aa).

NAD(+) is bound by residues 7–13 (GAAGGIG) and Asp-34. Substrate is bound by residues Arg-81 and Arg-87. NAD(+)-binding positions include Asn-94 and 117–119 (ITN). Residues Asn-119 and Arg-153 each contribute to the substrate site. Residue His-177 is the Proton acceptor of the active site. Met-227 is a binding site for NAD(+).

The protein belongs to the LDH/MDH superfamily. MDH type 1 family. Homodimer.

The catalysed reaction is (S)-malate + NAD(+) = oxaloacetate + NADH + H(+). Catalyzes the reversible oxidation of malate to oxaloacetate. The sequence is that of Malate dehydrogenase from Escherichia coli O17:K52:H18 (strain UMN026 / ExPEC).